Here is a 544-residue protein sequence, read N- to C-terminus: CTP synthase (544 aa).

The tract at residues 1-265 (MARFIFITGG…DKAVLSAFGL (265 aa)) is amidoligase domain. Serine 13 contacts CTP. Residue serine 13 coordinates UTP. Position 14–19 (14–19 (SLGKGL)) interacts with ATP. Residue tyrosine 54 participates in L-glutamine binding. Aspartate 71 is an ATP binding site. 2 residues coordinate Mg(2+): aspartate 71 and glutamate 139. Residues 146-148 (DIE), 186-191 (KTKPTQ), and lysine 222 contribute to the CTP site. UTP-binding positions include 186-191 (KTKPTQ) and lysine 222. In terms of domain architecture, Glutamine amidotransferase type-1 spans 291–543 (TIGVVGKYVG…VAAALKQSRL (253 aa)). Residue glycine 355 participates in L-glutamine binding. The Nucleophile; for glutamine hydrolysis role is filled by cysteine 382. Residues 383–386 (LGMQ), glutamate 406, and arginine 471 contribute to the L-glutamine site. Residues histidine 516 and glutamate 518 contribute to the active site.

Belongs to the CTP synthase family. As to quaternary structure, homotetramer.

It catalyses the reaction UTP + L-glutamine + ATP + H2O = CTP + L-glutamate + ADP + phosphate + 2 H(+). The enzyme catalyses L-glutamine + H2O = L-glutamate + NH4(+). The catalysed reaction is UTP + NH4(+) + ATP = CTP + ADP + phosphate + 2 H(+). It participates in pyrimidine metabolism; CTP biosynthesis via de novo pathway; CTP from UDP: step 2/2. With respect to regulation, allosterically activated by GTP, when glutamine is the substrate; GTP has no effect on the reaction when ammonia is the substrate. The allosteric effector GTP functions by stabilizing the protein conformation that binds the tetrahedral intermediate(s) formed during glutamine hydrolysis. Inhibited by the product CTP, via allosteric rather than competitive inhibition. Its function is as follows. Catalyzes the ATP-dependent amination of UTP to CTP with either L-glutamine or ammonia as the source of nitrogen. Regulates intracellular CTP levels through interactions with the four ribonucleotide triphosphates. In Zymomonas mobilis subsp. mobilis (strain ATCC 31821 / ZM4 / CP4), this protein is CTP synthase.